Here is a 245-residue protein sequence, read N- to C-terminus: Mannose/glucose-specific lectin (245 aa).

A carbohydrate-binding residues include aspartate 87 and glycine 107. Asparagine 119 is a glycosylation site (N-linked (GlcNAc...) asparagine). The Mn(2+) site is built by glutamate 129 and aspartate 131. Aspartate 131 and phenylalanine 133 together coordinate Ca(2+). Serine 138 and asparagine 139 together coordinate a carbohydrate. Asparagine 139 and aspartate 142 together coordinate Ca(2+). Mn(2+) contacts are provided by aspartate 142 and histidine 147. 3 residues coordinate a carbohydrate: glycine 221, glutamate 222, and glutamine 223.

The protein belongs to the leguminous lectin family. Homodimer.

Mannose/glucose-specific lectin that also binds derivatives N-acetyl-D-glucosamine and alpha-methyl-D-mannopyranoside with even higher affinity. Has hemagglutinating activity towards rabbit erythrocytes. Is toxic towards brine shrimp A.nauplii. In rats, induces dose-dependent paw edema. The protein is Mannose/glucose-specific lectin of Centrolobium tomentosum (Arariba).